The chain runs to 186 residues: DNA damage up-regulated protein (186 aa).

Residues 147–166 are disordered; the sequence is ATENGEGCRPARDPASSPSS.

As to quaternary structure, interacts with DNA damage response proteins ATR, H2AX, PCNA, RAD18 and RAD51C. Forms a complex with H2AX and RAD18 following DDUP phosphorylation. Post-translationally, phosphorylated in an ATR-dependent manner; phosphorylation is required for interaction with H2AX and RAD18 and for DDUP-mediated DNA damage repair.

Its subcellular location is the nucleus. It is found in the chromosome. Its function is as follows. Promotes DNA damage repair through both homologous recombination repair (HRR) and post-replication repair (PRR) mechanisms. Enhances the retention of DNA damage response protein RAD18 at sites of DNA damage. This allows for HRR via association of RAD18 with RAD51C and for PRR via RAD18-mediated promotion of PCNA monoubiquitination. The polypeptide is DNA damage up-regulated protein (Homo sapiens (Human)).